Consider the following 360-residue polypeptide: Photosystem II protein D1 2 (360 aa).

Transmembrane regions (helical) follow at residues 29-46 (YIGW…SATI), 118-133 (HFLI…EWEF), and 142-156 (WICV…AATA). A chlorophyll a-binding site is contributed by His118. Tyr126 provides a ligand contact to pheophytin a. [CaMn4O5] cluster is bound by residues Asp170 and Glu189. Residues 197–218 (LHMFGVAGVFGGSLFAAMHGSL) form a helical membrane-spanning segment. His198 contributes to the chlorophyll a binding site. Residues His215 and 264-265 (SF) contribute to the a quinone site. Position 215 (His215) interacts with Fe cation. Position 272 (His272) interacts with Fe cation. Residues 274-288 (FLAAWPVIGIWLTSL) form a helical membrane-spanning segment. Positions 332, 333, 342, and 344 each coordinate [CaMn4O5] cluster. Residues 345–360 (GTESAPVAFAAALGDG) constitute a propeptide that is removed on maturation.

This sequence belongs to the reaction center PufL/M/PsbA/D family. As to quaternary structure, PSII is composed of 1 copy each of membrane proteins PsbA, PsbB, PsbC, PsbD, PsbE, PsbF, PsbH, PsbI, PsbJ, PsbK, PsbL, PsbM, PsbT, PsbX, Psb30/Ycf12, peripheral proteins PsbO, CyanoQ (PsbQ), PsbU, PsbV and a large number of cofactors. It forms dimeric complexes. The D1/D2 heterodimer binds P680, chlorophylls that are the primary electron donor of PSII, and subsequent electron acceptors. It shares a non-heme iron and each subunit binds pheophytin, quinone, additional chlorophylls, carotenoids and lipids. D1 provides most of the ligands for the Mn4-Ca-O5 cluster of the oxygen-evolving complex (OEC). There is also a Cl(-1) ion associated with D1 and D2, which is required for oxygen evolution. The PSII complex binds additional chlorophylls, carotenoids and specific lipids. serves as cofactor. Post-translationally, tyr-161 forms a radical intermediate that is referred to as redox-active TyrZ, YZ or Y-Z. C-terminally processed by CtpA; processing is essential to allow assembly of the oxygen-evolving complex and thus photosynthetic growth.

The protein localises to the cell inner membrane. It carries out the reaction 2 a plastoquinone + 4 hnu + 2 H2O = 2 a plastoquinol + O2. Its function is as follows. Photosystem II (PSII) is a light-driven water:plastoquinone oxidoreductase that uses light energy to abstract electrons from H(2)O, generating O(2) and a proton gradient subsequently used for ATP formation. It consists of a core antenna complex that captures photons, and an electron transfer chain that converts photonic excitation into a charge separation. The D1/D2 (PsbA/PsbD) reaction center heterodimer binds P680, the primary electron donor of PSII as well as several subsequent electron acceptors. This chain is Photosystem II protein D1 2, found in Gloeobacter violaceus (strain ATCC 29082 / PCC 7421).